Consider the following 350-residue polypeptide: MALLAITALAGMDLAQWQALLNNVAFAISLGAMLFYWGGAAFPQMQLLAELGLAGMIGANLTMAALLTARWIDAGYFPLSNLYESLFFLAWGITALHLLALHWSRSRWVGVMTAPVVTGIVAFAALVLPEDMQVAQPLVPALQSNWLMMHVTVMLLAYAALLVGSLLSISFLIVTRGQEVHLKGNSLGLQFRPPQPQTHPEWAEATLPSPASELAYAGLRSPRPAPSSAELPPQPAPEGIPWQRLSLAEILDNTSYRLIGLGFPLLTIGIIAGAVWANEAWGTYWSWDPKETWALITWLVFAAYLHARITKGWQGRRPALLASLGFGVVWVCYLGVNFLGKGLHSYGWFF.

8 consecutive transmembrane segments (helical) span residues 23 to 43 (NVAF…AAFP), 47 to 67 (LLAE…AALL), 82 to 102 (LYES…LALH), 108 to 128 (WVGV…ALVL), 153 to 173 (VMLL…SFLI), 258 to 278 (LIGL…VWAN), 293 to 313 (WALI…TKGW), and 319 to 339 (ALLA…VNFL).

This sequence belongs to the CcmF/CycK/Ccl1/NrfE/CcsA family. As to quaternary structure, may interact with ccs1.

Its subcellular location is the cellular thylakoid membrane. Functionally, required during biogenesis of c-type cytochromes (cytochrome c6 and cytochrome f) at the step of heme attachment. This Synechococcus sp. (strain JA-2-3B'a(2-13)) (Cyanobacteria bacterium Yellowstone B-Prime) protein is Cytochrome c biogenesis protein CcsA.